The primary structure comprises 226 residues: N-acetyltransferase family 8 member 3 (226 aa).

Transmembrane regions (helical) follow at residues 36-56 (MLLL…LFLA) and 58-78 (GSWL…WFLA). Residues 61–220 (LLVLLSILTL…PMINLKYSLT (160 aa)) enclose the N-acetyltransferase domain.

The protein belongs to the camello family.

The protein resides in the nucleus membrane. It is found in the cytoplasm. It localises to the perinuclear region. It carries out the reaction L-lysyl-[protein] + acetyl-CoA = N(6)-acetyl-L-lysyl-[protein] + CoA + H(+). Functionally, has histone acetyltransferase activity in vitro, with specificity for histone H4. This is N-acetyltransferase family 8 member 3 from Mus musculus (Mouse).